A 429-amino-acid chain; its full sequence is UDP-N-acetylglucosamine 1-carboxyvinyltransferase (429 aa).

22–23 (KN) is a binding site for phosphoenolpyruvate. Arg-102 lines the UDP-N-acetyl-alpha-D-glucosamine pocket. Cys-126 acts as the Proton donor in catalysis. Cys-126 is modified (2-(S-cysteinyl)pyruvic acid O-phosphothioketal). UDP-N-acetyl-alpha-D-glucosamine-binding positions include 131–135 (RPVDL), 171–174 (KVSV), Asp-316, and Ile-338.

Belongs to the EPSP synthase family. MurA subfamily.

The protein resides in the cytoplasm. It catalyses the reaction phosphoenolpyruvate + UDP-N-acetyl-alpha-D-glucosamine = UDP-N-acetyl-3-O-(1-carboxyvinyl)-alpha-D-glucosamine + phosphate. It functions in the pathway cell wall biogenesis; peptidoglycan biosynthesis. In terms of biological role, cell wall formation. Adds enolpyruvyl to UDP-N-acetylglucosamine. The sequence is that of UDP-N-acetylglucosamine 1-carboxyvinyltransferase from Brucella abortus (strain S19).